The chain runs to 1047 residues: MALPSLLLVVAALAGGVRPPGARNLTLAVVLPEHNLSYAWAWPRVGPAVALAMEALGRALPVDLRFVSSELDGACSEYLAPLRAVDLKLYHDPDLLLGPGCVYPAASVARFASHWRLPLLTAGAVASGFSAKSEHYRTLVRTGPSAPKLGEFVVMLHGHFNWTARAALLYLDARTDDRPHYFTIEGVFEALQGSNLSVQHQVYAREPGGPEQATHFIRANGRIVYICGPLEMLHEILLQAQRENLTNGDYVFFYLDVFGESLRAGPTRSMGRPWQDNRTREQAQALREAFQTVLVITYREPPNPEYQEFQNRLLIRAREDFGVELAPSLMNLIAGCFYDGILLYAEVLNETIQEGGTREDGLRIVEKMQGRRYRGVTGLVVMDKNNDRETDFVLWAMGDLVSGDFQPAAHYSGAEKQIWWTGRPIPWVKGVPPLDNPPCAFDMDDPSCDKTPLSTLAIVALGTGITFIMFGVSSFLIFRKLMLEKELASMLWRIRWEELQFGNSERCHKGAGSRLTLSLRGSSYGSLMTAHGKYQIFANTGHFKGNVVAIKHVNKKRIELTRQVLFELKHMRDVQFNHLTRFIGACIDPPNICIVTEYCPRGSLQDILENDSINLDWMFRYSLINDLVKGMAFLHNSIIASHGSLKSSNCVVDSRFVLKITDYGLASFRSTAEPDDSHALYAKKLWTAPELLSGNPLPTTGMQKADVYSFGIILQEIALRSGPFYLEGLDLSPKEIVQKVRNGQRPYFRPSIDRTQLNEELVLLMERCWAQDPAERPDFGQIKGFIRRFNKEGGTSILDNLLLRMEQYANNLEKLVEERTQAYLEEKRKAEALLYQILPHSVAEQLKRGETVQAEAFDSVTIYFSDIVGFTALSAESTPMQVVTLLNDLYTCFDAIIDNFDVYKVETIGDAYMVVSGLPGRNGQRHAPEIARMALALLDAVSSFRIRHRPHDQLRLRIGVHTGPVCAGVVGLKMPRYCLFGDTVNTASRMESNGQALKIHVSSTTKDALDELGCFQLELRGDVEMKGKGKMRTYWLLGERKGPAGLL.

Positions 1–16 are cleaved as a signal peptide; it reads MALPSLLLVVAALAGG. Residues 17–458 lie on the Extracellular side of the membrane; it reads VRPPGARNLT…DKTPLSTLAI (442 aa). Residues asparagine 24 and asparagine 35 are each glycosylated (N-linked (GlcNAc...) asparagine). Cysteine 75 and cysteine 101 are joined by a disulfide. N-linked (GlcNAc...) asparagine glycans are attached at residues asparagine 161, asparagine 195, asparagine 244, asparagine 277, and asparagine 349. A helical transmembrane segment spans residues 459-478; the sequence is VALGTGITFIMFGVSSFLIF. Topologically, residues 479–1047 are cytoplasmic; the sequence is RKLMLEKELA…GERKGPAGLL (569 aa). Serine 513 is subject to Phosphoserine. The region spanning 513–786 is the Protein kinase domain; sequence SRLTLSLRGS…PDFGQIKGFI (274 aa). Threonine 516 is subject to Phosphothreonine. Phosphoserine occurs at positions 518, 522, 523, and 526. Threonine 529 is modified (phosphothreonine). Residues 861 to 991 form the Guanylate cyclase domain; that stretch reads TIYFSDIVGF…DTVNTASRME (131 aa).

The protein belongs to the adenylyl cyclase class-4/guanylyl cyclase family. In terms of processing, phosphorylated. Phosphorylation of the protein kinase-like domain is required for full activation by CNP. Glycosylated.

Its subcellular location is the cell membrane. The catalysed reaction is GTP = 3',5'-cyclic GMP + diphosphate. Functionally, receptor for the C-type natriuretic peptide NPPC/CNP hormone. Has guanylate cyclase activity upon binding of its ligand. May play a role in the regulation of skeletal growth. The sequence is that of Atrial natriuretic peptide receptor 2 (NPR2) from Bos taurus (Bovine).